Here is a 338-residue protein sequence, read N- to C-terminus: DNA-directed RNA polymerase subunit alpha (338 aa).

The interval Met1–Asp233 is alpha N-terminal domain (alpha-NTD). The interval Ile250–Leu338 is alpha C-terminal domain (alpha-CTD).

The protein belongs to the RNA polymerase alpha chain family. In terms of assembly, homodimer. The RNAP catalytic core consists of 2 alpha, 1 beta, 1 beta' and 1 omega subunit. When a sigma factor is associated with the core the holoenzyme is formed, which can initiate transcription.

It carries out the reaction RNA(n) + a ribonucleoside 5'-triphosphate = RNA(n+1) + diphosphate. DNA-dependent RNA polymerase catalyzes the transcription of DNA into RNA using the four ribonucleoside triphosphates as substrates. This chain is DNA-directed RNA polymerase subunit alpha, found in Syntrophotalea carbinolica (strain DSM 2380 / NBRC 103641 / GraBd1) (Pelobacter carbinolicus).